The following is a 152-amino-acid chain: Photosystem II extrinsic protein U, chloroplastic (152 aa).

Residues 1–35 constitute a chloroplast transit peptide; it reads MDSTAFVGAAAPLRVAAAARSTICMAAADDKPVVS. A thylakoid-targeting transit peptide spans 36–59; the sequence is RRAALTGAAAAALAAVAGSLPALA.

Belongs to the PsbU family. As to quaternary structure, PSII is composed of 1 copy each of membrane proteins PsbA, PsbB, PsbC, PsbD, PsbE, PsbF, PsbH, PsbI, PsbJ, PsbK, PsbL, PsbM, PsbT, PsbX, PsbY, PsbZ, Psb30/Ycf12, at least 3 peripheral proteins of the oxygen-evolving complex and a large number of cofactors. It forms dimeric complexes. The oxygen-evolving complex in red algae is composed of PsbO (OEC33), PsbQ', cytochrome c-550 and PsbU. Post-translationally, predicted to be translocated into the thylakoid lumen by the Tat system.

It localises to the plastid. The protein localises to the chloroplast thylakoid membrane. One of the extrinsic, lumenal subunits of photosystem II (PSII). PSII is a light-driven water plastoquinone oxidoreductase, using light energy to abstract electrons from H(2)O, generating a proton gradient subsequently used for ATP formation. The extrinsic proteins stabilize the structure of photosystem II oxygen-evolving complex (OEC), the ion environment of oxygen evolution and protect the OEC against heat-induced inactivation. The chain is Photosystem II extrinsic protein U, chloroplastic from Pyropia yezoensis (Susabi-nori).